The chain runs to 541 residues: Arginine--tRNA ligase (541 aa).

Positions 119 to 129 match the 'HIGH' region motif; sequence ANPTGPLHIGH.

Belongs to the class-I aminoacyl-tRNA synthetase family. As to quaternary structure, monomer.

It is found in the cytoplasm. The catalysed reaction is tRNA(Arg) + L-arginine + ATP = L-arginyl-tRNA(Arg) + AMP + diphosphate. This Helicobacter pylori (strain G27) protein is Arginine--tRNA ligase.